The following is a 224-amino-acid chain: uncharacterized protein (224 aa).

A 4Fe-4S domain is found at 9-68 (SKMVDVNEITKYLPGFNCGACGYKRCDLFAEALLNKDVKLEDCPFLLRERFKENYEKLKE). [4Fe-4S] cluster-binding residues include Cys-26, Cys-29, Cys-34, and Cys-51.

[4Fe-4S] cluster is required as a cofactor.

This is an uncharacterized protein from Methanocaldococcus jannaschii (strain ATCC 43067 / DSM 2661 / JAL-1 / JCM 10045 / NBRC 100440) (Methanococcus jannaschii).